The following is a 427-amino-acid chain: uncharacterized protein (427 aa).

3 helical membrane-spanning segments follow: residues 10–30 (LAYL…AGFW), 43–63 (KIIS…SKLA), and 71–91 (IFEI…SFIS). A Phosphothreonine modification is found at Thr199. Ser234 carries the post-translational modification Phosphoserine. 5 helical membrane-spanning segments follow: residues 253-273 (NLNP…IGPL), 288-308 (FAEA…VVLG), 327-347 (LLIG…LPII), 358-378 (ILDD…PPAI), and 397-417 (ILFW…VSGA).

It belongs to the auxin efflux carrier (TC 2.A.69) family.

The protein resides in the membrane. This is an uncharacterized protein from Saccharomyces cerevisiae (strain ATCC 204508 / S288c) (Baker's yeast).